A 591-amino-acid chain; its full sequence is uncharacterized protein (591 aa).

The next 4 membrane-spanning stretches (helical) occupy residues 389–409, 411–431, 538–558, and 571–591; these read VYLGSYFAGASGLVIAGSALI, GGSPWFGLGLAGVGILAGGIL, GILPEWALWLITIVIGLFALS, and PIISIIVVIAILYALTYFNLL.

The protein localises to the membrane. This is an uncharacterized protein from Mycoplasma (Bacteriophage L2).